Consider the following 636-residue polypeptide: Chitin synthase VI (636 aa).

The next 4 membrane-spanning stretches (helical) occupy residues 23 to 43, 374 to 394, 399 to 419, and 427 to 447; these read LQWFAFWSFSILLTVPWLFCI, TIRTTALLFFVMVLALLTTTA, LPVGFMAVSLGLNWLLMLYFG, and IWFYPLMFVLNPLFNWYYMVY. Residues 595–636 are disordered; that stretch reads QRLRLEQRPRTGPSLNARWQNGPQASETSQGRSQVDDVGIAF. A compositionally biased stretch (polar residues) spans 607 to 627; that stretch reads PSLNARWQNGPQASETSQGRS.

This sequence belongs to the chitin synthase family. Class VI subfamily. As to expression, moderately expressed during appressorium formation.

It localises to the cell membrane. The catalysed reaction is [(1-&gt;4)-N-acetyl-beta-D-glucosaminyl](n) + UDP-N-acetyl-alpha-D-glucosamine = [(1-&gt;4)-N-acetyl-beta-D-glucosaminyl](n+1) + UDP + H(+). In terms of biological role, polymerizes chitin, a structural polymer of the cell wall and septum, by transferring the sugar moiety of UDP-GlcNAc to the non-reducing end of the growing chitin polymer. Contributes to the production of conidia but is the only chitine synthase that does not contribute to the ability of fungal conidia to germinate. Involved in fungal stress tolerances. The chain is Chitin synthase VI from Metarhizium acridum (strain CQMa 102).